The sequence spans 208 residues: Protein-L-isoaspartate O-methyltransferase (208 aa).

Ser-59 is a catalytic residue.

It belongs to the methyltransferase superfamily. L-isoaspartyl/D-aspartyl protein methyltransferase family.

The protein resides in the cytoplasm. It catalyses the reaction [protein]-L-isoaspartate + S-adenosyl-L-methionine = [protein]-L-isoaspartate alpha-methyl ester + S-adenosyl-L-homocysteine. Its function is as follows. Catalyzes the methyl esterification of L-isoaspartyl residues in peptides and proteins that result from spontaneous decomposition of normal L-aspartyl and L-asparaginyl residues. It plays a role in the repair and/or degradation of damaged proteins. The sequence is that of Protein-L-isoaspartate O-methyltransferase from Erwinia tasmaniensis (strain DSM 17950 / CFBP 7177 / CIP 109463 / NCPPB 4357 / Et1/99).